The chain runs to 471 residues: Putative multidrug resistance protein MdtD (471 aa).

Topologically, residues Met-1 to Gln-11 are periplasmic. Residues Leu-12 to Ala-32 form a helical membrane-spanning segment. Topologically, residues Leu-33–His-48 are cytoplasmic. A helical membrane pass occupies residues Met-49–Ala-69. The Periplasmic portion of the chain corresponds to Asp-70–Asn-76. Residues Ile-77–Thr-97 traverse the membrane as a helical segment. Topologically, residues Leu-98–Leu-101 are cytoplasmic. Residues Leu-102–Met-124 traverse the membrane as a helical segment. At Lys-125 to Thr-137 the chain is on the periplasmic side. Residues Phe-138–Val-158 form a helical membrane-spanning segment. Residues Glu-159 to His-164 lie on the Cytoplasmic side of the membrane. Residues Trp-165–Met-185 traverse the membrane as a helical segment. Residues Pro-186 to Asp-196 are Periplasmic-facing. The chain crosses the membrane as a helical span at residues Leu-197–Ser-217. The Cytoplasmic segment spans residues Lys-218 to Pro-224. The chain crosses the membrane as a helical span at residues Leu-225–Ala-245. The Periplasmic portion of the chain corresponds to Gln-246–Thr-262. The helical transmembrane segment at Phe-263–Met-283 threads the bilayer. The Cytoplasmic portion of the chain corresponds to Thr-284–Pro-285. Residues Val-286–Met-306 traverse the membrane as a helical segment. At Val-307–Thr-341 the chain is on the periplasmic side. A helical membrane pass occupies residues Leu-342–Leu-362. Over Gln-363 to Ser-395 the chain is Cytoplasmic. Residues Met-396–Phe-416 traverse the membrane as a helical segment. Over Gly-417–Thr-430 the chain is Periplasmic. Residues Val-431–Ala-451 form a helical membrane-spanning segment. At Arg-452 to Gln-471 the chain is on the cytoplasmic side.

Belongs to the major facilitator superfamily. TCR/Tet family.

Its subcellular location is the cell inner membrane. In Escherichia coli O45:K1 (strain S88 / ExPEC), this protein is Putative multidrug resistance protein MdtD.